A 299-amino-acid chain; its full sequence is rRNA methyltransferase (299 aa).

The disordered stretch occupies residues 14–53; that stretch reads AEKRSGRGRMAAARTTGAQSRKTAQRSGRSEADRRRRVHG. The segment covering 21 to 31 has biased composition (low complexity); it reads GRMAAARTTGA. S-adenosyl-L-methionine-binding residues include Asn55, Leu57, Gly82, Glu103, Asp128, and Asn144.

It belongs to the class I-like SAM-binding methyltransferase superfamily. rRNA adenine N(6)-methyltransferase family.

Its function is as follows. Probable RNA methylase. Confers resistance to carbomycin and several other macrolides, lincomycin and vernamycin B, but not to all macrolide-lincosamide-streptogramin B antibiotics. The chain is rRNA methyltransferase (carB) from Streptomyces thermotolerans.